Here is a 152-residue protein sequence, read N- to C-terminus: Ribosome maturation factor RimP (152 aa).

This sequence belongs to the RimP family.

The protein resides in the cytoplasm. Its function is as follows. Required for maturation of 30S ribosomal subunits. The polypeptide is Ribosome maturation factor RimP (Proteus mirabilis (strain HI4320)).